The sequence spans 435 residues: Methylenetetrahydrofolate--tRNA-(uracil-5-)-methyltransferase TrmFO (435 aa).

FAD is bound at residue 9–14 (GAGLAG).

It belongs to the MnmG family. TrmFO subfamily. Requires FAD as cofactor.

It is found in the cytoplasm. The catalysed reaction is uridine(54) in tRNA + (6R)-5,10-methylene-5,6,7,8-tetrahydrofolate + NADH + H(+) = 5-methyluridine(54) in tRNA + (6S)-5,6,7,8-tetrahydrofolate + NAD(+). It catalyses the reaction uridine(54) in tRNA + (6R)-5,10-methylene-5,6,7,8-tetrahydrofolate + NADPH + H(+) = 5-methyluridine(54) in tRNA + (6S)-5,6,7,8-tetrahydrofolate + NADP(+). Its function is as follows. Catalyzes the folate-dependent formation of 5-methyl-uridine at position 54 (M-5-U54) in all tRNAs. The polypeptide is Methylenetetrahydrofolate--tRNA-(uracil-5-)-methyltransferase TrmFO (Staphylococcus aureus (strain JH1)).